The primary structure comprises 63 residues: Small ribosomal subunit protein uS14 (63 aa).

Residues C26, C29, C42, and C45 each contribute to the Zn(2+) site.

It belongs to the universal ribosomal protein uS14 family. Zinc-binding uS14 subfamily. As to quaternary structure, part of the 30S ribosomal subunit. Contacts proteins S3 and S10. The cofactor is Zn(2+).

Functionally, binds 16S rRNA, required for the assembly of 30S particles and may also be responsible for determining the conformation of the 16S rRNA at the A site. This Gloeobacter violaceus (strain ATCC 29082 / PCC 7421) protein is Small ribosomal subunit protein uS14.